A 752-amino-acid polypeptide reads, in one-letter code: DNA ligase (752 aa).

A disordered region spans residues 1–25 (MKRNGFVPSNSVGRRGIPSNSTSSA). Residues 91 to 95 (DADFD), 140 to 141 (SL), and E170 contribute to the NAD(+) site. K172 (N6-AMP-lysine intermediate) is an active-site residue. NAD(+)-binding residues include R193, E233, K350, and K374. Positions 474, 477, 493, and 499 each coordinate Zn(2+). The region spanning 669–752 (STPRTLAGLT…TLLDGGPAAL (84 aa)) is the BRCT domain.

This sequence belongs to the NAD-dependent DNA ligase family. LigA subfamily. Mg(2+) is required as a cofactor. Requires Mn(2+) as cofactor.

The catalysed reaction is NAD(+) + (deoxyribonucleotide)n-3'-hydroxyl + 5'-phospho-(deoxyribonucleotide)m = (deoxyribonucleotide)n+m + AMP + beta-nicotinamide D-nucleotide.. Its function is as follows. DNA ligase that catalyzes the formation of phosphodiester linkages between 5'-phosphoryl and 3'-hydroxyl groups in double-stranded DNA using NAD as a coenzyme and as the energy source for the reaction. It is essential for DNA replication and repair of damaged DNA. The chain is DNA ligase from Nocardioides sp. (strain ATCC BAA-499 / JS614).